We begin with the raw amino-acid sequence, 273 residues long: Large ribosomal subunit protein uL2 (273 aa).

Disordered stretches follow at residues 28 to 53 and 221 to 273; these read KPFAPLLEKNSKSGGRNNNGRITTRH and RGTA…RRSK. Residues 39–48 show a composition bias toward low complexity; that stretch reads KSGGRNNNGR. At Lys242 the chain carries N6-acetyllysine.

This sequence belongs to the universal ribosomal protein uL2 family. In terms of assembly, part of the 50S ribosomal subunit. Forms a bridge to the 30S subunit in the 70S ribosome.

Functionally, one of the primary rRNA binding proteins. Required for association of the 30S and 50S subunits to form the 70S ribosome, for tRNA binding and peptide bond formation. It has been suggested to have peptidyltransferase activity; this is somewhat controversial. Makes several contacts with the 16S rRNA in the 70S ribosome. The protein is Large ribosomal subunit protein uL2 of Escherichia coli (strain SE11).